The chain runs to 143 residues: Endoribonuclease YbeY (143 aa).

Residues His-111, His-115, and Asp-121 each coordinate Zn(2+).

This sequence belongs to the endoribonuclease YbeY family. Zn(2+) is required as a cofactor.

It is found in the cytoplasm. Single strand-specific metallo-endoribonuclease involved in late-stage 70S ribosome quality control and in maturation of the 3' terminus of the 16S rRNA. The polypeptide is Endoribonuclease YbeY (Cytophaga hutchinsonii (strain ATCC 33406 / DSM 1761 / CIP 103989 / NBRC 15051 / NCIMB 9469 / D465)).